A 946-amino-acid chain; its full sequence is Phosphatidylinositol 4,5-bisphosphate 5-phosphatase INP51 (946 aa).

In terms of domain architecture, SAC spans 151–480 (LKKLFSDGTF…YYWLDRTYTK (330 aa)). Disordered regions lie at residues 872–902 (SDSI…SDLK) and 927–946 (PKRD…FIER). Acidic residues predominate over residues 936 to 946 (ENEDEPLFIER).

Belongs to the synaptojanin family. It in the central section; belongs to the inositol 1,4,5-trisphosphate 5-phosphatase family. Interacts with IRS4 and TAX4.

The protein localises to the cytoplasm. It is found in the cytoskeleton. It localises to the actin patch. It carries out the reaction a 1,2-diacyl-sn-glycero-3-phospho-(1D-myo-inositol-4,5-bisphosphate) + H2O = a 1,2-diacyl-sn-glycero-3-phospho-(1D-myo-inositol 4-phosphate) + phosphate. Its activity is regulated as follows. IRS4 and TAX4 are both positive regulator of INP51 activity and phosphatidylinositol 4,5-bisphosphate turnover. Functionally, controls the cellular levels and subcellular distribution of phosphatidylinositol 4,5-bisphosphate (PtdIns(4,5)P2). Does not utilize phosphatidylinositol 3,5-bisphosphate (PtdIns(3,5)P2), nor phosphatidylinositol 3-phosphate (PtdIns(3)P) and phosphatidylinositol 4-phosphate (PtdIns(4)P). Plays an essential role in a TGN (trans Golgi network)-to-early endosome pathway. Involved in endocytosis and acts as a negative regulator of the Slm pathway which modulates polarized actin assembly and growth. This chain is Phosphatidylinositol 4,5-bisphosphate 5-phosphatase INP51 (INP51), found in Saccharomyces cerevisiae (strain ATCC 204508 / S288c) (Baker's yeast).